The following is a 155-amino-acid chain: Small ribosomal subunit protein uS7 (155 aa).

Belongs to the universal ribosomal protein uS7 family. As to quaternary structure, part of the 30S ribosomal subunit. Contacts proteins S9 and S11.

Its function is as follows. One of the primary rRNA binding proteins, it binds directly to 16S rRNA where it nucleates assembly of the head domain of the 30S subunit. Is located at the subunit interface close to the decoding center, probably blocks exit of the E-site tRNA. This is Small ribosomal subunit protein uS7 from Xylella fastidiosa (strain M12).